Consider the following 319-residue polypeptide: Beta-ketoacyl-[acyl-carrier-protein] synthase III (319 aa).

Residues Cys113 and His246 contribute to the active site. Residues 247–251 (QANRR) form an ACP-binding region. Asn276 is a catalytic residue.

It belongs to the thiolase-like superfamily. FabH family. Homodimer.

It is found in the cytoplasm. It catalyses the reaction malonyl-[ACP] + acetyl-CoA + H(+) = 3-oxobutanoyl-[ACP] + CO2 + CoA. The protein operates within lipid metabolism; fatty acid biosynthesis. Functionally, catalyzes the condensation reaction of fatty acid synthesis by the addition to an acyl acceptor of two carbons from malonyl-ACP. Catalyzes the first condensation reaction which initiates fatty acid synthesis and may therefore play a role in governing the total rate of fatty acid production. Possesses both acetoacetyl-ACP synthase and acetyl transacylase activities. Its substrate specificity determines the biosynthesis of branched-chain and/or straight-chain of fatty acids. The protein is Beta-ketoacyl-[acyl-carrier-protein] synthase III of Rhizorhabdus wittichii (strain DSM 6014 / CCUG 31198 / JCM 15750 / NBRC 105917 / EY 4224 / RW1) (Sphingomonas wittichii).